We begin with the raw amino-acid sequence, 236 residues long: Potassium/proton antiporter CemA (236 aa).

The next 4 helical transmembrane spans lie at 18 to 38 (YIIS…FLVL), 114 to 134 (IAHV…LINA), 161 to 181 (LILF…KILI), and 196 to 216 (FIFL…KYWI).

It belongs to the CemA family.

The protein resides in the plastid. It localises to the chloroplast inner membrane. It catalyses the reaction K(+)(in) + H(+)(out) = K(+)(out) + H(+)(in). Contributes to K(+)/H(+) antiport activity by supporting proton efflux to control proton extrusion and homeostasis in chloroplasts in a light-dependent manner to modulate photosynthesis. Prevents excessive induction of non-photochemical quenching (NPQ) under continuous-light conditions. Indirectly promotes efficient inorganic carbon uptake into chloroplasts. The protein is Potassium/proton antiporter CemA of Mesostigma viride (Green alga).